The chain runs to 520 residues: Interferon lambda receptor 1 (520 aa).

An N-terminal signal peptide occupies residues 1–20 (MAGPERWGPLLLCLLQAAPG). The Extracellular segment spans residues 21 to 228 (RPRLAPPQNV…LLEVPEANWA (208 aa)). Positions 26-126 (PPQNVTLLSQ…LDYLFEVEPA (101 aa)) constitute a Fibronectin type-III domain. N-linked (GlcNAc...) asparagine glycans are attached at residues asparagine 29 and asparagine 36. 2 cysteine pairs are disulfide-bonded: cysteine 74–cysteine 82 and cysteine 86–cysteine 150. Residues asparagine 142 and asparagine 169 are each glycosylated (N-linked (GlcNAc...) asparagine). Cysteine 195 and cysteine 217 are disulfide-bonded. Residues 229 to 249 (FLVLPSLLILLLVIAAGGVIW) form a helical membrane-spanning segment. The Cytoplasmic segment spans residues 250–520 (KTLMGNPWFQ…GRTLGHYMAR (271 aa)). 2 disordered regions span residues 302 to 439 (VRPT…FLEE) and 477 to 520 (ESSP…YMAR). Positions 323–336 (AEDEEEEDEEDTED) are enriched in acidic residues. The segment covering 380–392 (SSAWDSSDRSWAS) has biased composition (low complexity). A compositionally biased stretch (acidic residues) spans 479 to 495 (SPEEEEEARESEIEDSD).

The protein belongs to the type II cytokine receptor family. As to quaternary structure, heterodimer with IL10RB. Ubiquitinated by FBXO45-containing E3 ligase leading to proteasomal degradation. Widely expressed.

Its subcellular location is the membrane. Functionally, the IFNLR1/IL10RB dimer is a receptor for the cytokine ligands IFNL2 and IFNL3 and mediates their antiviral activity. The ligand/receptor complex stimulate the activation of the JAK/STAT signaling pathway leading to the expression of IFN-stimulated genes (ISG), which contribute to the antiviral state. Determines the cell type specificity of the lambda interferon action. Shows a more restricted pattern of expression in the epithelial tissues thereby limiting responses to lambda interferons primarily to epithelial cells of the respiratory, gastrointestinal, and reproductive tracts. Seems not to be essential for early virus-activated host defense in vaginal infection, but plays an important role in Toll-like receptor (TLR)-induced antiviral defense. Plays a significant role in the antiviral immune defense in the intestinal epithelium. This Homo sapiens (Human) protein is Interferon lambda receptor 1 (IFNLR1).